An 81-amino-acid polypeptide reads, in one-letter code: Trefoil factor 1 (81 aa).

The signal sequence occupies residues 1 to 21; that stretch reads MEHKVTCVLAMVLMLALSSLA. Residue Gln-22 is modified to Pyrrolidone carboxylic acid. Residues 26 to 69 enclose the P-type domain; that stretch reads ETCAVIPRERINCGFPGVTAQQCKEKGCCFDDSVRGFPWCFRPL. 3 disulfides stabilise this stretch: Cys-28–Cys-54, Cys-38–Cys-53, and Cys-48–Cys-65.

Its subcellular location is the secreted. Its function is as follows. Stabilizer of the mucous gel overlying the gastrointestinal mucosa that provides a physical barrier against various noxious agents. This is Trefoil factor 1 (Tff1) from Rattus norvegicus (Rat).